The chain runs to 234 residues: Large ribosomal subunit protein uL1 (234 aa).

This sequence belongs to the universal ribosomal protein uL1 family. In terms of assembly, part of the 50S ribosomal subunit.

Binds directly to 23S rRNA. The L1 stalk is quite mobile in the ribosome, and is involved in E site tRNA release. In terms of biological role, protein L1 is also a translational repressor protein, it controls the translation of the L11 operon by binding to its mRNA. This Bdellovibrio bacteriovorus (strain ATCC 15356 / DSM 50701 / NCIMB 9529 / HD100) protein is Large ribosomal subunit protein uL1.